The chain runs to 296 residues: Phosphatidylglycerol--prolipoprotein diacylglyceryl transferase (296 aa).

The next 4 membrane-spanning stretches (helical) occupy residues 10-30, 57-77, 92-112, and 119-139; these read IAFSLGPVQVHWYGLMYLAAF, LLFYGMLGVVLGGRIGYMLFY, VWEGGMSFHGGLLGVLIACWL, and LHFFDVMDFVAPLVPLGLGFG. Residue R140 coordinates a 1,2-diacyl-sn-glycero-3-phospho-(1'-sn-glycerol). Transmembrane regions (helical) follow at residues 194–214, 220–240, and 254–274; these read QLYEAALEGVVMFVVLWTFSM, YAVSGLFALLYGVFRFIVEFV, and WLTMGQILSLPLVAVGLVLLA.

It belongs to the Lgt family.

Its subcellular location is the cell inner membrane. The enzyme catalyses L-cysteinyl-[prolipoprotein] + a 1,2-diacyl-sn-glycero-3-phospho-(1'-sn-glycerol) = an S-1,2-diacyl-sn-glyceryl-L-cysteinyl-[prolipoprotein] + sn-glycerol 1-phosphate + H(+). It functions in the pathway protein modification; lipoprotein biosynthesis (diacylglyceryl transfer). Functionally, catalyzes the transfer of the diacylglyceryl group from phosphatidylglycerol to the sulfhydryl group of the N-terminal cysteine of a prolipoprotein, the first step in the formation of mature lipoproteins. The protein is Phosphatidylglycerol--prolipoprotein diacylglyceryl transferase of Xanthomonas axonopodis pv. citri (strain 306).